The chain runs to 343 residues: 3-isopropylmalate dehydrogenase (343 aa).

Substrate is bound by residues R94, R104, R128, and D218. Residues D218, D242, and D246 each coordinate Mg(2+). 278–290 contributes to the NAD(+) binding site; that stretch reads GSAPDIAGQNKAN.

It belongs to the isocitrate and isopropylmalate dehydrogenases family. LeuB type 2 subfamily. As to quaternary structure, homodimer. It depends on Mg(2+) as a cofactor. Mn(2+) is required as a cofactor.

The protein localises to the cytoplasm. It catalyses the reaction (2R,3S)-3-isopropylmalate + NAD(+) = 4-methyl-2-oxopentanoate + CO2 + NADH. It functions in the pathway amino-acid biosynthesis; L-leucine biosynthesis; L-leucine from 3-methyl-2-oxobutanoate: step 3/4. Catalyzes the oxidation of 3-carboxy-2-hydroxy-4-methylpentanoate (3-isopropylmalate) to 3-carboxy-4-methyl-2-oxopentanoate. The product decarboxylates to 4-methyl-2 oxopentanoate. This Bifidobacterium longum subsp. infantis (strain ATCC 15697 / DSM 20088 / JCM 1222 / NCTC 11817 / S12) protein is 3-isopropylmalate dehydrogenase.